We begin with the raw amino-acid sequence, 435 residues long: Adenylosuccinate synthetase (435 aa).

Residues 20-26 (GDEGKGK) and 48-50 (GHT) contribute to the GTP site. D21 serves as the catalytic Proton acceptor. Residues D21 and G48 each contribute to the Mg(2+) site. Residues 21-24 (DEGK), 46-49 (NAGH), T134, R148, Q229, T244, and R308 contribute to the IMP site. The Proton donor role is filled by H49. 304 to 310 (TTTGRPR) provides a ligand contact to substrate. Residues R310, 336–338 (KVD), and 422–424 (SMG) each bind GTP.

The protein belongs to the adenylosuccinate synthetase family. Homodimer. Requires Mg(2+) as cofactor.

It localises to the cytoplasm. It carries out the reaction IMP + L-aspartate + GTP = N(6)-(1,2-dicarboxyethyl)-AMP + GDP + phosphate + 2 H(+). The protein operates within purine metabolism; AMP biosynthesis via de novo pathway; AMP from IMP: step 1/2. In terms of biological role, plays an important role in the de novo pathway of purine nucleotide biosynthesis. Catalyzes the first committed step in the biosynthesis of AMP from IMP. The protein is Adenylosuccinate synthetase of Thermoplasma acidophilum (strain ATCC 25905 / DSM 1728 / JCM 9062 / NBRC 15155 / AMRC-C165).